A 35-amino-acid chain; its full sequence is Potassium channel toxin alpha-KTx 6.15 (35 aa).

4 disulfide bridges follow: cysteine 3–cysteine 24, cysteine 9–cysteine 29, cysteine 13–cysteine 31, and cysteine 19–cysteine 34.

It belongs to the short scorpion toxin superfamily. Potassium channel inhibitor family. Alpha-KTx 06 subfamily. In terms of tissue distribution, expressed by the venom gland.

The protein localises to the secreted. Functionally, blocks voltage-gated potassium channels rKv1.1/KCNA1 (IC(50)=13 nM), rKv1.2/KCNA2 (IC(50)=16 nM) and rKv1.3/KCNA3 (IC(50)=2 nM). The polypeptide is Potassium channel toxin alpha-KTx 6.15 (Hemiscorpius lepturus (Scorpion)).